An 85-amino-acid chain; its full sequence is UPF0386 protein VF_0869 (85 aa).

It belongs to the UPF0386 family.

This chain is UPF0386 protein VF_0869, found in Aliivibrio fischeri (strain ATCC 700601 / ES114) (Vibrio fischeri).